Reading from the N-terminus, the 257-residue chain is Spermidine/putrescine transport system permease protein PotC (257 aa).

Over 1-7 (MSRFFLR) the chain is Cytoplasmic. A helical transmembrane segment spans residues 8-27 (NAFMFVVYAYLYIPIIILVT). Over 28 to 65 (NSFNKDRYGLSWKGFSWNWYERLFNNDTLIQAAIHSVT) the chain is Periplasmic. The 189-residue stretch at 60–248 (AIHSVTIAFF…VLSLALVVLS (189 aa)) folds into the ABC transmembrane type-1 domain. Residues 66–85 (IAFFAATLATIVGGLTAIAL) form a helical membrane-spanning segment. At 86–100 (YRYRFRGKQAVSGML) the chain is on the cytoplasmic side. Residues 101 to 120 (FIVMMSPDIVMAVSLLALFM) form a helical membrane-spanning segment. Over 121–128 (VVGISLGF) the chain is Periplasmic. A helical transmembrane segment spans residues 129-148 (WSLLLAHVTFCLPYVTVTIF). The Cytoplasmic portion of the chain corresponds to 149–176 (SRLNGFDSRMLEAAKDLGASEVTILRKI). A helical membrane pass occupies residues 177-196 (ILPLALPAVVSGWLLSFTIS). Over 197 to 231 (LDDVVVSSFVSGVSYEILPLRIFSLVKTGVTPEVN) the chain is Periplasmic. A helical membrane pass occupies residues 232 to 251 (ALATIMIVLSLALVVLSQLI). Residues 252 to 257 (TRKNNH) lie on the Cytoplasmic side of the membrane.

This sequence belongs to the binding-protein-dependent transport system permease family. CysTW subfamily.

The protein localises to the cell inner membrane. Its function is as follows. Required for the activity of the bacterial periplasmic transport system of putrescine and spermidine. In Haemophilus influenzae (strain ATCC 51907 / DSM 11121 / KW20 / Rd), this protein is Spermidine/putrescine transport system permease protein PotC (potC).